Consider the following 341-residue polypeptide: Ribosomal RNA small subunit methyltransferase C (341 aa).

Belongs to the methyltransferase superfamily. RsmC family. Monomer.

Its subcellular location is the cytoplasm. The enzyme catalyses guanosine(1207) in 16S rRNA + S-adenosyl-L-methionine = N(2)-methylguanosine(1207) in 16S rRNA + S-adenosyl-L-homocysteine + H(+). In terms of biological role, specifically methylates the guanine in position 1207 of 16S rRNA in the 30S particle. The chain is Ribosomal RNA small subunit methyltransferase C from Shewanella amazonensis (strain ATCC BAA-1098 / SB2B).